The following is a 276-amino-acid chain: Zinc transporter ZTP29 (276 aa).

The Cytoplasmic portion of the chain corresponds to 1-6 (MDSQML). Residues 7 to 27 (VALGLSLVGGLSTSLGALFVV) form a helical membrane-spanning segment. Residues 28 to 35 (LSETPNMK) lie on the Lumenal side of the membrane. A helical transmembrane segment spans residues 36–56 (MLGLLQGFASGLMLSISFLDL). Residues 57–63 (AHNAINS) lie on the Cytoplasmic side of the membrane. The chain crosses the membrane as a helical span at residues 64–84 (IGFFKANLWFFGGVIFFACIT). Topologically, residues 85–123 (KFIPEPTLGPSTDGKRRKKNGDEGGKDMMKKHRKQVLYS) are lumenal. The chain crosses the membrane as a helical span at residues 124 to 144 (GLITAIGISLHNFPEGMAVFL). At 145-156 (GSIKGMRVGVNL) the chain is on the cytoplasmic side. Residues 157–177 (ALAIALHNIPEGVAVALPIYF) form a helical membrane-spanning segment. At 178–187 (ATESKWQAFK) the chain is on the lumenal side. A helical membrane pass occupies residues 188–208 (LATLSGLAEPLGVIIVAYLFP). The Cytoplasmic portion of the chain corresponds to 209–219 (RSLSPEILEGL). The helical transmembrane segment at 220–240 (LGAVGGIMAFLTLHEMLPLAF) threads the bilayer. The Lumenal segment spans residues 241–250 (DYAGQKQAVK). A helical transmembrane segment spans residues 251 to 271 (AVFFGMACMSASLYFLELSLP). Residues 272–276 (ETMSL) lie on the Cytoplasmic side of the membrane.

It belongs to the ZIP transporter (TC 2.A.5) family. ZupT subfamily. In terms of tissue distribution, expressed in hypocotyls, cotyledons, leaves and anthers.

Its subcellular location is the endoplasmic reticulum membrane. Its function is as follows. Zinc transporter involved response to salt stress. May act through the regulation of zinc levels required to induce the unfolded protein response (UPR) pathway. The sequence is that of Zinc transporter ZTP29 (ZTP29) from Arabidopsis thaliana (Mouse-ear cress).